We begin with the raw amino-acid sequence, 151 residues long: MNQIILDLQIACVDNQGLPNENDFQLWLSSAISPFKKNAEVTIRLVDEIESRQLNFQYRQIDKPTNVLSFPFISPVQVPLPLLGDLIICRQIVEKEAVLQKKALWAHWAHMVVHGALHLLGYDHILNDDAKKMESIETEIMMYLGYPNPYD.

Residues His-114, His-118, and His-124 each coordinate Zn(2+).

It belongs to the endoribonuclease YbeY family. Requires Zn(2+) as cofactor.

It localises to the cytoplasm. Its function is as follows. Single strand-specific metallo-endoribonuclease involved in late-stage 70S ribosome quality control and in maturation of the 3' terminus of the 16S rRNA. This chain is Endoribonuclease YbeY, found in Hamiltonella defensa subsp. Acyrthosiphon pisum (strain 5AT).